We begin with the raw amino-acid sequence, 1315 residues long: MGLEFFFKFGYAFLTITLMIMIWMSLARASMFDREMEETHYPPCTYNVMCTCSKSSTDLGIVHCKNVPFPALPRMVNQSKVFMLHMENTGLREIEPYFLQSTGMYRLKISGNHLTEIPDDAFTGLERSLWELILPQNDLVEIPSKSLRHLQKLRHLDLGYNHITHIQHDSFRGLEDSLQTLILRENCISQLMSHSFSGLLILETLDLSGNNLFEIDPNVFVDGMPRLTRLLLTDNILSEIPYDALGPLKSLRTLDISHNVIWSLSGNETYEIKASTKLNLDNLHLEYNHIEVLPPNSFKYFDTVNRTFFDGNPIHTLREDAFKPARIREIYMRYCGLTNISPVAFDSLVNSLQILDLSGNNLTKLHHKLFNNFDVLRVISMRDNKIKIQKPTETFNAVHYTLLKLDLSGDRNDPTNLQTLRNMTRMRNMRSLSISRLGSSSVGPEDFKDFGVELEDLQITRASLSGIQSHAFKHVRGLKRLDFSENGISSIENDAFHEIGHSLISLKMSHGYSGSALPAEPLRHLTSLQELDFSNNHISSMSDTSFHFLKNLRLLELHDNRIEQVLKGTFQGDIHSKLEEISLRFNHLTSISQHTFFDLEALRKLHLDDNKIDKIERRAFMNLDELEYLSLRGNKINNLADESFQNLPKLEILDMAFNQLPNFNFDYFDQVGTLSNLNVNVSHNQIRQLMYNSSWSGRNEHGGMYHSNIKILDLSHNNISIIHPGYFRPAEISLTHLHLGYNSLMNTTRDVFGNMPHLQWLDLSYNWIHELDFDAFKNTKQLQLVFFGHNYLSDIPQDIFKPVQGLRIVDFSHNHLRGLPDNLFYNGGMEKLDVSHNMMLKIPSSSLSSLAALTLCELHLSNNFISTIHSMDLSNKFRSLRYLDISYNYLLRIDDAVFATMPKLAVLDLSHNRDLKVMDKSFMGLENSLIKLGLENISLSTVPEIRLKYLREFRLGYNELPSIPQELAHNMSNLRMLDLSNNDLTNVPLMTQALPHLRRLMLSGNPITSLNNNSFDGVNEDLEMLDISNFRLHYFEYGCLDSLPHLRSLKLTAYSHLEHFNIPHLLRHHYNIRQLWIEAPQPFTRIVKKGSGPTQEMQTLQLGNPTDLQREMEGHLPSKLTNITFSGPQFTNLNERILRGMRSPYLYMQLFNTSLQALPPNFFKYMGRVRNISLDIRYHNRNLKKIPNPNTGAVPYLPNSVFLTDLKMSHTDLNCDCDLGWVEFWQRKRRQYICSSQTWTDTVFRTFMNSPCQVYGRHNCDEHDDDLRETRCENKGGQQLMEALKFDLECGWDNANCREAAFVVVMVCVAMVFWM.

The first 29 residues, 1-29 (MGLEFFFKFGYAFLTITLMIMIWMSLARA), serve as a signal peptide directing secretion. An N-linked (GlcNAc...) (high mannose) asparagine; alternate glycan is attached at Asn77. Asn77 carries an N-linked (GlcNAc...) (paucimannose) asparagine; alternate glycan. LRR repeat units lie at residues 80-101 (KVFMLHMENTGLREIEPYFLQS), 103-124 (GMYRLKISGNHLTEIPDDAFTG), 128-149 (SLWELILPQNDLVEIPSKSLRH), 152-173 (KLRHLDLGYNHITHIQHDSFRG), 177-198 (SLQTLILRENCISQLMSHSFSG), 201-222 (ILETLDLSGNNLFEIDPNVFVD), 226-247 (RLTRLLLTDNILSEIPYDALGP), 250-271 (SLRTLDISHNVIWSLSGNETYE), and 279-300 (NLDNLHLEYNHIEVLPPNSFKY). N-linked (GlcNAc...) (paucimannose) asparagine; alternate glycosylation occurs at Asn267. Asn267 carries an N-linked (GlcNAc...) (complex) asparagine; alternate glycan. Asn305 carries N-linked (GlcNAc...) (high mannose) asparagine; alternate glycosylation. N-linked (GlcNAc...) (paucimannose) asparagine; alternate glycosylation occurs at Asn305. 27 LRR repeats span residues 326-347 (RIREIYMRYCGLTNISPVAFDS), 351-372 (SLQILDLSGNNLTKLHHKLFNN), 375-396 (VLRVISMRDNKIKIQKPTETFN), 401-424 (TLLKLDLSGDRNDPTNLQTLRNMT), 477-498 (GLKRLDFSENGISSIENDAFHE), 527-548 (SLQELDFSNNHISSMSDTSFHF), 551-572 (NLRLLELHDNRIEQVLKGTFQG), 577-598 (KLEEISLRFNHLTSISQHTFFD), 601-622 (ALRKLHLDDNKIDKIERRAFMN), 625-646 (ELEYLSLRGNKINNLADESFQN), 649-670 (KLEILDMAFNQLPNFNFDYFDQ), 676-696 (NLNVNVSHNQIRQLMYNSSWS), 708-729 (NIKILDLSHNNISIIHPGYFRP), 733-754 (SLTHLHLGYNSLMNTTRDVFGN), 757-778 (HLQWLDLSYNWIHELDFDAFKN), 781-802 (QLQLVFFGHNYLSDIPQDIFKP), 805-826 (GLRIVDFSHNHLRGLPDNLFYN), 828-849 (GMEKLDVSHNMMLKIPSSSLSS), 854-875 (TLCELHLSNNFISTIHSMDLSN), 879-900 (SLRYLDISYNYLLRIDDAVFAT), 903-924 (KLAVLDLSHNRDLKVMDKSFMG), 928-948 (SLIKLGLENISLSTVPEIRLK), 949-970 (YLREFRLGYNELPSIPQELAHN), 973-994 (NLRMLDLSNNDLTNVPLMTQAL), 996-1017 (HLRRLMLSGNPITSLNNNSFDG), 1021-1044 (DLEMLDISNFRLHYFEYGCLDSLP), and 1045-1066 (HLRSLKLTAYSHLEHFNIPHLL). Asn361 is a glycosylation site (N-linked (GlcNAc...) (high mannose) asparagine). Residue Asn422 is glycosylated (N-linked (GlcNAc...) asparagine). N-linked (GlcNAc...) (high mannose) asparagine glycosylation is present at Asn680. The N-linked (GlcNAc...) (high mannose) asparagine; alternate glycan is linked to Asn692. N-linked (GlcNAc...) (paucimannose) asparagine; alternate glycosylation is present at Asn692. N-linked (GlcNAc...) (high mannose) asparagine glycosylation occurs at Asn718. An N-linked (GlcNAc...) asparagine glycan is attached at Asn746. An N-linked (GlcNAc...) (high mannose) asparagine glycan is attached at Asn936. Asn970 carries N-linked (GlcNAc...) (paucimannose) asparagine glycosylation. An N-linked (GlcNAc...) (complex) asparagine glycan is attached at Asn1012. 3 N-linked (GlcNAc...) (high mannose) asparagine glycosylation sites follow: Asn1122, Asn1152, and Asn1171. In terms of domain architecture, LRRCT spans 1211-1274 (TDLNCDCDLG…DDLRETRCEN (64 aa)).

It belongs to the chaoptin family. Expressed in photoreceptor cells and their axons in the adult retina, the ocellus and larval photoreceptor organ.

Its subcellular location is the cell membrane. Required for photoreceptor cell morphogenesis. Mediates homophilic cellular adhesion. The protein is Chaoptin (chp) of Drosophila melanogaster (Fruit fly).